The following is a 352-amino-acid chain: S-adenosylmethionine:tRNA ribosyltransferase-isomerase (352 aa).

The protein belongs to the QueA family. In terms of assembly, monomer.

The protein resides in the cytoplasm. It carries out the reaction 7-aminomethyl-7-carbaguanosine(34) in tRNA + S-adenosyl-L-methionine = epoxyqueuosine(34) in tRNA + adenine + L-methionine + 2 H(+). The protein operates within tRNA modification; tRNA-queuosine biosynthesis. Functionally, transfers and isomerizes the ribose moiety from AdoMet to the 7-aminomethyl group of 7-deazaguanine (preQ1-tRNA) to give epoxyqueuosine (oQ-tRNA). The polypeptide is S-adenosylmethionine:tRNA ribosyltransferase-isomerase (Vibrio cholerae serotype O1 (strain ATCC 39541 / Classical Ogawa 395 / O395)).